The primary structure comprises 172 residues: Ubiquitin-conjugating enzyme E2 PEX4 (172 aa).

One can recognise a UBC core domain in the interval 14–167; sequence SASKRLIKEL…VELWCQDSDS (154 aa). The Glycyl thioester intermediate role is filled by Cys-104.

This sequence belongs to the ubiquitin-conjugating enzyme family.

It catalyses the reaction S-ubiquitinyl-[E1 ubiquitin-activating enzyme]-L-cysteine + [E2 ubiquitin-conjugating enzyme]-L-cysteine = [E1 ubiquitin-activating enzyme]-L-cysteine + S-ubiquitinyl-[E2 ubiquitin-conjugating enzyme]-L-cysteine.. The protein operates within protein modification; protein ubiquitination. Its function is as follows. Ubiquitin-conjugating enzyme E2 that is essential for peroxisome biogenesis and plays a key role in development, pathogenicity, and cell wall integrity. Required for long and very long-chain fatty acid utilization and is involved in lipid droplet accumulation and the elimination of reactive oxygen species. Controls the expression of proteins involved in protein biosynthesis, fatty acid metabolism, cell wall synthesis, oxidation-reduction reactions, as well as of the enzymes involved in the biosynthesis of the mycotoxin deoxynivalenol (DON), including TRI5, TRI6, and TRI10. The chain is Ubiquitin-conjugating enzyme E2 PEX4 from Gibberella zeae (strain ATCC MYA-4620 / CBS 123657 / FGSC 9075 / NRRL 31084 / PH-1) (Wheat head blight fungus).